We begin with the raw amino-acid sequence, 145 residues long: Neuromedin-S (145 aa).

The first 25 residues, 1–25 (MKYLAQFPSILAIYCFCLLQIPSSG), serve as a signal peptide directing secretion. Propeptides lie at residues 26–64 (FPRP…IYKR), 65–100 (FLFH…ADRR), and 101–103 (MKT). Asn136 bears the Asparagine amide mark. Positions 139–145 (NLDFDTW) are excised as a propeptide.

The protein belongs to the NmU family.

It localises to the secreted. In terms of biological role, implicated in the regulation of circadian rhythms through autocrine and/or paracrine actions. This is Neuromedin-S (NMS) from Bos taurus (Bovine).